Consider the following 119-residue polypeptide: Flagellar transcriptional regulator FlhD (119 aa).

The protein belongs to the FlhD family. In terms of assembly, homodimer; disulfide-linked. Forms a heterohexamer composed of two FlhC and four FlhD subunits. Each FlhC binds a FlhD dimer, forming a heterotrimer, and a hexamer assembles by dimerization of two heterotrimers.

The protein localises to the cytoplasm. Functions in complex with FlhC as a master transcriptional regulator that regulates transcription of several flagellar and non-flagellar operons by binding to their promoter region. Activates expression of class 2 flagellar genes, including fliA, which is a flagellum-specific sigma factor that turns on the class 3 genes. Also regulates genes whose products function in a variety of physiological pathways. This is Flagellar transcriptional regulator FlhD from Pectobacterium atrosepticum (strain SCRI 1043 / ATCC BAA-672) (Erwinia carotovora subsp. atroseptica).